The primary structure comprises 170 residues: Protein-export protein SecB (170 aa).

The protein belongs to the SecB family. In terms of assembly, homotetramer, a dimer of dimers. One homotetramer interacts with 1 SecA dimer.

It is found in the cytoplasm. Its function is as follows. One of the proteins required for the normal export of preproteins out of the cell cytoplasm. It is a molecular chaperone that binds to a subset of precursor proteins, maintaining them in a translocation-competent state. It also specifically binds to its receptor SecA. The sequence is that of Protein-export protein SecB from Xanthomonas campestris pv. campestris (strain 8004).